We begin with the raw amino-acid sequence, 164 residues long: UPF0304 protein YfbU (164 aa).

Belongs to the UPF0304 family.

The sequence is that of UPF0304 protein YfbU from Escherichia coli O139:H28 (strain E24377A / ETEC).